The primary structure comprises 478 residues: MKMSIRTPPRLLELAGRSLLRDQALAMSTLEELPTELFPPLFMEAFSRRCCEALKLMVQAWPFRRLPLRPLIKMPCLEAFQAVLDGLDALLTQGVCPRRWKLQVLDLQDVCENFWMVWSEAMARGSFLNAKRNKTPVQDCPRMRGQQPLTVFVELWLKNRTLDEYLTYLLLWVKQRKDLLHLCCKKLKILGMPFRNIRSILKMVNLDCIQEVEVNCKWVLPILTQFTPYLGHMRNLQKLVLSHMDVSRYVSPEQKKEIVTQFTTQFLKLHCLQKLYMNSVSFLEGHLDQLLSCLKTSLKVLTITNCVLLESDLKHLSQCPSISQLKTLDLSGIRLTNYSLVPLQILLEKVAATLEYLDLDDCGIIDSQVNAILPALSRCFELNAFSFCGNPISMATLENLLSHTIILKNLCVEVYPAPRESYGADGTLCWNRFAQIRAELMNRVRDLRHPKRIFFCIDNCPDCGNRSFYDLEADQYCC.

The stretch at 17–40 is one LRR 1 repeat; the sequence is RSLLRDQALAMSTLEELPTELFPP. The stretch at 99 to 126 is one LRR 1; degenerate repeat; the sequence is RWKLQVLDLQDVCENFWMVWSEAMARGS. An LRR 2; degenerate repeat occupies 181 to 205; sequence HLCCKKLKILGMPFRNIRSILKMVN. Residues 206–232 form an LRR 3; degenerate repeat; the sequence is LDCIQEVEVNCKWVLPILTQFTPYLGH. The stretch at 233–268 is one LRR 4; degenerate repeat; the sequence is MRNLQKLVLSHMDVSRYVSPEQKKEIVTQFTTQFLK. LRR repeat units lie at residues 269 to 294, 295 to 326, 327 to 348, 351 to 378, and 379 to 403; these read LHCL…LSCL, KTSL…SQLK, TLDL…ILLE, AATL…ALSR, and CFEL…LLSH.

This sequence belongs to the PRAME family.

In Homo sapiens (Human), this protein is PRAME family member 27.